The primary structure comprises 327 residues: Putative D-threonate 4-phosphate dehydrogenase (327 aa).

Positions 139 and 140 each coordinate substrate. Positions 169, 213, and 268 each coordinate a divalent metal cation. Substrate-binding residues include Lys-276, Asn-285, and Arg-294.

This sequence belongs to the PdxA family. PdxA2 subfamily. In terms of assembly, homodimer. The cofactor is a divalent metal cation.

The catalysed reaction is 4-O-phospho-D-threonate + NAD(+) = dihydroxyacetone phosphate + CO2 + NADH. In terms of biological role, catalyzes the NAD-dependent oxidation and subsequent decarboxylation of D-threonate 4-phosphate to produce dihydroxyacetone phosphate (DHAP). This chain is Putative D-threonate 4-phosphate dehydrogenase, found in Salmonella typhi.